A 348-amino-acid chain; its full sequence is NADH-quinone oxidoreductase subunit H 1 (348 aa).

The next 8 helical transmembrane spans lie at 11-31 (IYYISMVAKVLVVFVFVLLTV), 83-103 (FAFLIAPIIALVPAFIGFAVI), 136-156 (VGVLYILALASIGVYGIVLAG), 172-192 (SAQMISYELAAGLAIISVFML), 208-228 (GAWYCFKQPLAFILFFICSLA), 268-288 (MVTVCAVTTTLFLGGWHGPAF), 289-309 (LPGWAWFIAKVYFLIFVCMWI), and 324-344 (LGWKVFLPLTLVNIIVTGIVV).

Belongs to the complex I subunit 1 family. NDH-1 is composed of 14 different subunits. Subunits NuoA, H, J, K, L, M, N constitute the membrane sector of the complex.

The protein resides in the cell inner membrane. It catalyses the reaction a quinone + NADH + 5 H(+)(in) = a quinol + NAD(+) + 4 H(+)(out). In terms of biological role, NDH-1 shuttles electrons from NADH, via FMN and iron-sulfur (Fe-S) centers, to quinones in the respiratory chain. The immediate electron acceptor for the enzyme in this species is believed to be ubiquinone. Couples the redox reaction to proton translocation (for every two electrons transferred, four hydrogen ions are translocated across the cytoplasmic membrane), and thus conserves the redox energy in a proton gradient. This subunit may bind ubiquinone. The protein is NADH-quinone oxidoreductase subunit H 1 of Geobacter sulfurreducens (strain ATCC 51573 / DSM 12127 / PCA).